A 177-amino-acid polypeptide reads, in one-letter code: Large ribosomal subunit protein uL6 (177 aa).

It belongs to the universal ribosomal protein uL6 family. In terms of assembly, part of the 50S ribosomal subunit.

Functionally, this protein binds to the 23S rRNA, and is important in its secondary structure. It is located near the subunit interface in the base of the L7/L12 stalk, and near the tRNA binding site of the peptidyltransferase center. This Pseudoalteromonas atlantica (strain T6c / ATCC BAA-1087) protein is Large ribosomal subunit protein uL6.